The chain runs to 296 residues: ADP-dependent (S)-NAD(P)H-hydrate dehydratase (296 aa).

The YjeF C-terminal domain maps to 18–292 (TALRFPHVFK…PAARWLRNRI (275 aa)). (6S)-NADPHX-binding residues include A53, G113, and H165. AMP contacts are provided by residues 202-206 (KGHKT) and G231. Position 232 (D232) interacts with (6S)-NADPHX.

The protein belongs to the NnrD/CARKD family. Homotetramer. Requires Mg(2+) as cofactor.

It catalyses the reaction (6S)-NADHX + ADP = AMP + phosphate + NADH + H(+). It carries out the reaction (6S)-NADPHX + ADP = AMP + phosphate + NADPH + H(+). Functionally, catalyzes the dehydration of the S-form of NAD(P)HX at the expense of ADP, which is converted to AMP. Together with NAD(P)HX epimerase, which catalyzes the epimerization of the S- and R-forms, the enzyme allows the repair of both epimers of NAD(P)HX, a damaged form of NAD(P)H that is a result of enzymatic or heat-dependent hydration. In Neisseria meningitidis serogroup B (strain ATCC BAA-335 / MC58), this protein is ADP-dependent (S)-NAD(P)H-hydrate dehydratase.